The chain runs to 188 residues: Accessory gene regulator protein B (188 aa).

Helical transmembrane passes span 49–69 (VALI…YFLV), 100–122 (VYFQ…LIIY), 143–163 (LLSI…PEPF), and 164–184 (KQLI…IFFP).

Belongs to the AgrB family.

Its subcellular location is the cell membrane. Functionally, essential for the production of a quorum sensing system signal molecule, the autoinducing peptide (AIP). This quorum sensing system is responsible for the regulation of the expression of virulence factor genes. Involved in the proteolytic processing of AgrD, the precursor of AIP. The chain is Accessory gene regulator protein B from Staphylococcus haemolyticus (strain JCSC1435).